The primary structure comprises 254 residues: Major prion protein (254 aa).

Positions 1-22 are cleaved as a signal peptide; that stretch reads MANLSYWLLALFVATWTDVGLC. An interaction with GRB2, ERI3 and SYN1 region spans residues 23–231; sequence KKRPKPGGWN…SQAYYDGRRS (209 aa). Residues 25 to 104 form a disordered region; it reads RPKPGGWNTG…THNQWNKPSK (80 aa). 5 repeat units span residues 51–59, 60–67, 68–75, 76–83, and 84–91. Positions 51 to 91 are 5 X 8 AA tandem repeats of P-H-G-G-G-W-G-Q; it reads PQGGGTWGQPHGGGWGQPHGGGWGQPHGGGWGQPHGGGWGQ. Positions 52–95 are enriched in gly residues; that stretch reads QGGGTWGQPHGGGWGQPHGGGWGQPHGGGWGQPHGGGWGQGGGT. Cu(2+)-binding residues include H61, G62, G63, H69, G70, G71, H77, G78, G79, H85, G86, and G87. The segment at 90–231 is prP27-30 (protease resistant core); that stretch reads GQGGGTHNQW…SQAYYDGRRS (142 aa). C179 and C214 are disulfide-bonded. Residues N181 and N197 are each glycosylated (N-linked (GlcNAc...) asparagine). The GPI-anchor amidated serine moiety is linked to residue S231. The propeptide at 232–254 is removed in mature form; that stretch reads SAVLFSSPPVILLISFLIFLIVG.

This sequence belongs to the prion family. As to quaternary structure, monomer and homodimer. Has a tendency to aggregate into amyloid fibrils containing a cross-beta spine, formed by a steric zipper of superposed beta-strands. Soluble oligomers may represent an intermediate stage on the path to fibril formation. Copper binding may promote oligomerization. Interacts with GRB2, APP, ERI3/PRNPIP and SYN1. Mislocalized cytosolically exposed PrP interacts with MGRN1; this interaction alters MGRN1 subcellular location and causes lysosomal enlargement. Interacts with KIAA1191.

The protein localises to the cell membrane. The protein resides in the golgi apparatus. Its function is as follows. Its primary physiological function is unclear. Has cytoprotective activity against internal or environmental stresses. May play a role in neuronal development and synaptic plasticity. May be required for neuronal myelin sheath maintenance. May play a role in iron uptake and iron homeostasis. Soluble oligomers are toxic to cultured neuroblastoma cells and induce apoptosis (in vitro). Association with GPC1 (via its heparan sulfate chains) targets PRNP to lipid rafts. Also provides Cu(2+) or Zn(2+) for the ascorbate-mediated GPC1 deaminase degradation of its heparan sulfate side chains. The sequence is that of Major prion protein (PRNP) from Cricetulus griseus (Chinese hamster).